A 444-amino-acid polypeptide reads, in one-letter code: Adenylosuccinate synthetase (444 aa).

GTP-binding positions include glycine 12–lysine 18 and glycine 40–threonine 42. Catalysis depends on aspartate 13, which acts as the Proton acceptor. The Mg(2+) site is built by aspartate 13 and glycine 40. Residues aspartate 13–lysine 16, asparagine 38–histidine 41, threonine 128, arginine 142, glutamine 223, threonine 238, and arginine 302 each bind IMP. Catalysis depends on histidine 41, which acts as the Proton donor. Residue threonine 298 to arginine 304 coordinates substrate. Residues arginine 304, lysine 330–aspartate 332, and serine 412–glycine 414 contribute to the GTP site.

Belongs to the adenylosuccinate synthetase family. Homodimer. Mg(2+) is required as a cofactor.

The protein resides in the cytoplasm. The catalysed reaction is IMP + L-aspartate + GTP = N(6)-(1,2-dicarboxyethyl)-AMP + GDP + phosphate + 2 H(+). It functions in the pathway purine metabolism; AMP biosynthesis via de novo pathway; AMP from IMP: step 1/2. Functionally, plays an important role in the de novo pathway of purine nucleotide biosynthesis. Catalyzes the first committed step in the biosynthesis of AMP from IMP. The chain is Adenylosuccinate synthetase from Synechococcus elongatus (strain ATCC 33912 / PCC 7942 / FACHB-805) (Anacystis nidulans R2).